We begin with the raw amino-acid sequence, 157 residues long: 2-C-methyl-D-erythritol 2,4-cyclodiphosphate synthase (157 aa).

Residues aspartate 8 and histidine 10 each coordinate a divalent metal cation. Residues aspartate 8–histidine 10 and histidine 34–serine 35 contribute to the 4-CDP-2-C-methyl-D-erythritol 2-phosphate site. Histidine 42 lines the a divalent metal cation pocket. Residues aspartate 56–glycine 58, threonine 132–glutamate 135, and arginine 142 each bind 4-CDP-2-C-methyl-D-erythritol 2-phosphate.

This sequence belongs to the IspF family. Homotrimer. The cofactor is a divalent metal cation.

The enzyme catalyses 4-CDP-2-C-methyl-D-erythritol 2-phosphate = 2-C-methyl-D-erythritol 2,4-cyclic diphosphate + CMP. The protein operates within isoprenoid biosynthesis; isopentenyl diphosphate biosynthesis via DXP pathway; isopentenyl diphosphate from 1-deoxy-D-xylulose 5-phosphate: step 4/6. Functionally, involved in the biosynthesis of isopentenyl diphosphate (IPP) and dimethylallyl diphosphate (DMAPP), two major building blocks of isoprenoid compounds. Catalyzes the conversion of 4-diphosphocytidyl-2-C-methyl-D-erythritol 2-phosphate (CDP-ME2P) to 2-C-methyl-D-erythritol 2,4-cyclodiphosphate (ME-CPP) with a corresponding release of cytidine 5-monophosphate (CMP). This is 2-C-methyl-D-erythritol 2,4-cyclodiphosphate synthase from Prosthecochloris aestuarii (strain DSM 271 / SK 413).